The sequence spans 559 residues: Formate--tetrahydrofolate ligase (559 aa).

ATP is bound at residue 68–75 (TPAGEGKT).

Belongs to the formate--tetrahydrofolate ligase family.

The catalysed reaction is (6S)-5,6,7,8-tetrahydrofolate + formate + ATP = (6R)-10-formyltetrahydrofolate + ADP + phosphate. The protein operates within one-carbon metabolism; tetrahydrofolate interconversion. This chain is Formate--tetrahydrofolate ligase, found in Rhizobium etli (strain CIAT 652).